The following is a 258-amino-acid chain: Deoxyribose-phosphate aldolase (258 aa).

The Proton donor/acceptor role is filled by Asp102. Lys165 functions as the Schiff-base intermediate with acetaldehyde in the catalytic mechanism. The active-site Proton donor/acceptor is Lys199.

This sequence belongs to the DeoC/FbaB aldolase family. DeoC type 2 subfamily.

It localises to the cytoplasm. The catalysed reaction is 2-deoxy-D-ribose 5-phosphate = D-glyceraldehyde 3-phosphate + acetaldehyde. The protein operates within carbohydrate degradation; 2-deoxy-D-ribose 1-phosphate degradation; D-glyceraldehyde 3-phosphate and acetaldehyde from 2-deoxy-alpha-D-ribose 1-phosphate: step 2/2. In terms of biological role, catalyzes a reversible aldol reaction between acetaldehyde and D-glyceraldehyde 3-phosphate to generate 2-deoxy-D-ribose 5-phosphate. This chain is Deoxyribose-phosphate aldolase, found in Aliivibrio fischeri (strain ATCC 700601 / ES114) (Vibrio fischeri).